A 487-amino-acid chain; its full sequence is UPF0276 protein SAV_2218 (487 aa).

The interval 1-285 is UPF0276; it reads MVEEGTMERL…LGAIRKTLEK (285 aa). Residues 286–487 are unknown; sequence AGTRAGASAG…RATRRVLLRR (202 aa). A disordered region spans residues 319–348; it reads AGPRRGGADAQAAPRAAGTEALSAASTSTP. Positions 326 to 348 are enriched in low complexity; sequence ADAQAAPRAAGTEALSAASTSTP.

In the N-terminal section; belongs to the UPF0276 family.

The polypeptide is UPF0276 protein SAV_2218 (Streptomyces avermitilis (strain ATCC 31267 / DSM 46492 / JCM 5070 / NBRC 14893 / NCIMB 12804 / NRRL 8165 / MA-4680)).